The sequence spans 233 residues: Glutathione S-transferase U15 (233 aa).

The GST N-terminal domain occupies 5 to 85 (EEVKLLGTWY…YIDETWNSSG (81 aa)). Glutathione-binding positions include 15-16 (SP), 42-43 (SK), 56-57 (KV), and 69-70 (VS). The GST C-terminal domain occupies 92–219 (HPYDRALARF…VPDIDKVAKF (128 aa)). Position 158 is a phosphothreonine (Thr158).

This sequence belongs to the GST superfamily. Tau family.

It localises to the cytoplasm. The protein resides in the cytosol. The enzyme catalyses RX + glutathione = an S-substituted glutathione + a halide anion + H(+). Its function is as follows. May be involved in the conjugation of reduced glutathione to a wide number of exogenous and endogenous hydrophobic electrophiles and have a detoxification role against certain herbicides. In Arabidopsis thaliana (Mouse-ear cress), this protein is Glutathione S-transferase U15 (GSTU15).